The sequence spans 194 residues: uncharacterized protein (194 aa).

Positions 6 to 66 constitute an HTH tetR-type domain; the sequence is EFDTALVLHR…SAVKSYLEGK (61 aa). A DNA-binding region (H-T-H motif) is located at residues 29-48; that stretch reads SLQDLLSHLGIARQSLYDTY.

This is an uncharacterized protein from Bacillus subtilis (strain 168).